The following is a 258-amino-acid chain: Peroxisomal membrane protein 11B (258 aa).

Position 43 is an N6-acetyllysine (Lys-43). The segment at 210-258 (VVRNACDLFIPLDKLGLWRCGPGIVGLCGLVSSILSILTLICPWLRLKP) is interaction with PEX19, PEX11G and FIS1 and peroxisome targeting. A helical membrane pass occupies residues 232–254 (GIVGLCGLVSSILSILTLICPWL).

The protein belongs to the peroxin-11 family. As to quaternary structure, homodimer. Heterodimer with PEX11G. Interacts with PEX19. Interacts with FIS1.

Its subcellular location is the peroxisome membrane. Its function is as follows. Involved in peroxisomal proliferation. May regulate peroxisome division by recruiting the dynamin-related GTPase DNM1L to the peroxisomal membrane. Promotes membrane protrusion and elongation on the peroxisomal surface. The sequence is that of Peroxisomal membrane protein 11B (PEX11B) from Bos taurus (Bovine).